The following is a 259-amino-acid chain: MNVKDETFWSVHNLCVNYEHAAVLYHISFSLGKGSLTAILGPNGAGKSTLLKASLGLIKPSSGTVYFFNQKFKKVRQRIAYMPQRASVDWDFPMTVLDLALMGCYSYKGMWGRISSDDRREAFHILERVGLESVADRQIGQLSGGQQQRAFLARALMQKADLYLMDELFSAIDMASFKTSVGVLQELRDQGKTIVVVHHDLSHVRQLFDHVVLLNKRLICCGPTDECLNGDTIFQTYGCEIELLEQTLKLSRGKQFGSC.

The region spanning valine 3–isoleucine 241 is the ABC transporter domain. Glycine 41–serine 48 is a binding site for ATP.

It belongs to the ABC transporter superfamily.

It localises to the cell inner membrane. In terms of biological role, part of an ATP-driven transport system CPn0346/CPn0347/CPn0348/CPn0349 for a metal. Probably responsible for energy coupling to the transport system. The chain is Probable metal transport system ATP-binding protein CPn_0348/CP_0412/CPj0348/CpB0355 from Chlamydia pneumoniae (Chlamydophila pneumoniae).